We begin with the raw amino-acid sequence, 247 residues long: MKKLVLLRHGESQWNRENRFTGWVDIDLSEKGREEAKAAGQLLKDEGFVFDMAYASVLKRAIRTLWTVLDQMDLMWIPVTKSWRLNERHYGALQGLNKTETAQRHGDEQVLIWRRSYDTPPPALDADDERHPSKDRRYAALTPEELPATECLKDTVARFLPYWHETIAPQIMDGKRVIITAHGNSLRALVKYLDNISDEDIVGLNIPTGIPLVYELDDDLKPIRSYYLGDQEELKKAQEAVAKQGKA.

Substrate contacts are provided by residues 8-15 (RHGESQWN), 21-22 (TG), R60, 87-90 (ERHY), K98, 114-115 (RR), and 183-184 (GN). H9 serves as the catalytic Tele-phosphohistidine intermediate. Residue E87 is the Proton donor/acceptor of the active site.

It belongs to the phosphoglycerate mutase family. BPG-dependent PGAM subfamily.

It catalyses the reaction (2R)-2-phosphoglycerate = (2R)-3-phosphoglycerate. Its pathway is carbohydrate degradation; glycolysis; pyruvate from D-glyceraldehyde 3-phosphate: step 3/5. Catalyzes the interconversion of 2-phosphoglycerate and 3-phosphoglycerate. This is 2,3-bisphosphoglycerate-dependent phosphoglycerate mutase from Chlorobaculum parvum (strain DSM 263 / NCIMB 8327) (Chlorobium vibrioforme subsp. thiosulfatophilum).